A 198-amino-acid chain; its full sequence is Succinate dehydrogenase [ubiquinone] cytochrome b subunit, mitochondrial (198 aa).

A mitochondrion-targeting transit peptide spans 1-50; it reads MSAMMVKLGLNKSALLLKPSAFSRAAALSSSRRLLFNTARTNFLSTSPLK. At 51–99 the chain is on the mitochondrial matrix side; sequence NVASEMNTKAAIAEEQILNKQRAKRPISPHLTIYQPQLTWYLSSLHRIS. A ubiquinone is bound by residues serine 93 and arginine 97. The helical transmembrane segment at 100–120 threads the bilayer; it reads LVLMGLGFYLFTILFGVSGLL. Over 121 to 139 the chain is Mitochondrial intermembrane; it reads GLGLTTEKVSNWYHQKFSK. Residues 140 to 160 form a helical membrane-spanning segment; it reads ITEWSIKGSFAYLFAIHYGGA. Position 156 (histidine 156) interacts with heme. Topologically, residues 161–175 are mitochondrial matrix; it reads IRHLIWDTAKELTLK. The chain crosses the membrane as a helical span at residues 176–196; that stretch reads GVYRTGYALIGFTAVLGTYLL. The Mitochondrial intermembrane segment spans residues 197–198; the sequence is TL.

Belongs to the cytochrome b560 family. As to quaternary structure, forms part of complex II containing four subunits: a flavoprotein (FP), an iron-sulfur protein (IP) and a cytochrome b composed of two integral membrane proteins. Heme is required as a cofactor.

It is found in the mitochondrion inner membrane. It participates in carbohydrate metabolism; tricarboxylic acid cycle. Its function is as follows. Membrane-anchoring mono-heme cytochrome b subunit of succinate dehydrogenase (SDH) that is involved in system II of the mitochondrial electron transport chain and is responsible for transferring electrons from succinate to ubiquinone (coenzyme Q). SDH3 and SDH4 form the membrane dimer that anchors the catalytic dimer formed by SDH1 and SDH2 to the matrix surface of the mitochondrial inner membrane. Electrons originating from the catalytic dimer enter the membrane dimer for ubiquinone reduction. This is Succinate dehydrogenase [ubiquinone] cytochrome b subunit, mitochondrial (SDH3) from Saccharomyces cerevisiae (strain ATCC 204508 / S288c) (Baker's yeast).